The following is a 298-amino-acid chain: Exosome complex component Rrp4 (298 aa).

The S1 motif domain occupies 63–131 (GDVVIGKIKD…EVKKVKLGLK (69 aa)). Residues 139 to 197 (RGGIIVDITPTKVPRLIGKKGSMINMIKDKTNCKIIVGQNGLVWVKGEEDMEQLTKDII) form the KH domain. The interval 276–298 (KNKKDKPLSYGNNSGNSYILNNR) is disordered. Over residues 285 to 298 (YGNNSGNSYILNNR) the composition is skewed to polar residues.

Belongs to the RRP4 family. As to quaternary structure, component of the archaeal exosome complex. Forms a trimer of Rrp4 and/or Csl4 subunits. The trimer associates with a hexameric ring-like arrangement composed of 3 Rrp41-Rrp42 heterodimers.

It is found in the cytoplasm. Its function is as follows. Non-catalytic component of the exosome, which is a complex involved in RNA degradation. Increases the RNA binding and the efficiency of RNA degradation. Confers strong poly(A) specificity to the exosome. This is Exosome complex component Rrp4 from Methanobrevibacter smithii (strain ATCC 35061 / DSM 861 / OCM 144 / PS).